Consider the following 381-residue polypeptide: Lipid-A-disaccharide synthase (381 aa).

The protein belongs to the LpxB family.

The catalysed reaction is 2-N,3-O-bis[(3R)-3-hydroxytetradecanoyl]-alpha-D-glucosaminyl 1-phosphate + UDP-2-N,3-O-bis[(3R)-3-hydroxytetradecanoyl]-alpha-D-glucosamine = lipid A disaccharide (E. coli) + UDP + H(+). It catalyses the reaction a lipid X + a UDP-2-N,3-O-bis[(3R)-3-hydroxyacyl]-alpha-D-glucosamine = a lipid A disaccharide + UDP + H(+). Its pathway is glycolipid biosynthesis; lipid IV(A) biosynthesis; lipid IV(A) from (3R)-3-hydroxytetradecanoyl-[acyl-carrier-protein] and UDP-N-acetyl-alpha-D-glucosamine: step 5/6. Functionally, condensation of UDP-2,3-diacylglucosamine and 2,3-diacylglucosamine-1-phosphate to form lipid A disaccharide, a precursor of lipid A, a phosphorylated glycolipid that anchors the lipopolysaccharide to the outer membrane of the cell. The chain is Lipid-A-disaccharide synthase from Erwinia tasmaniensis (strain DSM 17950 / CFBP 7177 / CIP 109463 / NCPPB 4357 / Et1/99).